We begin with the raw amino-acid sequence, 212 residues long: Dephospho-CoA kinase (212 aa).

Residues 8–212 (LVGVTGGLGS…QLLQQAMLRR (205 aa)) enclose the DPCK domain. 16 to 21 (GSGKSM) provides a ligand contact to ATP.

This sequence belongs to the CoaE family.

It is found in the cytoplasm. The enzyme catalyses 3'-dephospho-CoA + ATP = ADP + CoA + H(+). The protein operates within cofactor biosynthesis; coenzyme A biosynthesis; CoA from (R)-pantothenate: step 5/5. Catalyzes the phosphorylation of the 3'-hydroxyl group of dephosphocoenzyme A to form coenzyme A. The protein is Dephospho-CoA kinase of Chlorobium chlorochromatii (strain CaD3).